The sequence spans 290 residues: MALRQCAIYGKGGIGKSTTTQNLVAALAEAGKKVMIVGCDPKADSTRLILHSKAQNTVMEMAASAGSGEDLELEDVLQIGYGGVKCVESGGPEPGVGCAGRGVITAINFLEEEGAYSDDLDFVFYDVLGDVVCGGFAMPIRENKAQEIYIVCSGEMMAMYAANNIAKGIVKYAHSGSVRLGGLICNSRKTDREDELIMALAAKIGTQMIHFVPRDNVVQHAEIRRMTVIEYDPKAKQADEYRALAQKILNNKLLVIPNPASMEDLEELLMEFGIMEAEDESIVGKAGAEG.

10–17 (GKGGIGKS) serves as a coordination point for ATP. Residue cysteine 98 participates in [4Fe-4S] cluster binding. Arginine 101 bears the ADP-ribosylarginine; by dinitrogenase reductase ADP-ribosyltransferase mark. Cysteine 133 contacts [4Fe-4S] cluster.

This sequence belongs to the NifH/BchL/ChlL family. In terms of assembly, homodimer. [4Fe-4S] cluster is required as a cofactor. Post-translationally, the reversible ADP-ribosylation of Arg-101 inactivates the nitrogenase reductase and regulates nitrogenase activity.

The catalysed reaction is N2 + 8 reduced [2Fe-2S]-[ferredoxin] + 16 ATP + 16 H2O = H2 + 8 oxidized [2Fe-2S]-[ferredoxin] + 2 NH4(+) + 16 ADP + 16 phosphate + 6 H(+). Its function is as follows. The key enzymatic reactions in nitrogen fixation are catalyzed by the nitrogenase complex, which has 2 components: the iron protein (component 2) and a component 1 which is either a molybdenum-iron protein, a vanadium-iron, or an iron-iron protein. The chain is Nitrogenase iron protein 2 (vnfH) from Azotobacter chroococcum mcd 1.